A 690-amino-acid chain; its full sequence is UvrABC system protein B (690 aa).

Positions 39 to 422 constitute a Helicase ATP-binding domain; the sequence is EGLDDGLSFQ…EQQHAGQVVE (384 aa). Residue 52 to 59 coordinates ATP; sequence GVTGSGKT. The Beta-hairpin signature appears at 105–128; the sequence is YYDYYQPEAYVPSRDLFIEKDSSI. The Helicase C-terminal domain maps to 443-596; it reads QVDDLLAEIG…QIAFNLEHGI (154 aa). Residues 640–675 form the UVR domain; the sequence is AREIKRLEKSMMECAKNLEFEKAAAARDDLFRLRER.

Belongs to the UvrB family. Forms a heterotetramer with UvrA during the search for lesions. Interacts with UvrC in an incision complex.

It is found in the cytoplasm. The UvrABC repair system catalyzes the recognition and processing of DNA lesions. A damage recognition complex composed of 2 UvrA and 2 UvrB subunits scans DNA for abnormalities. Upon binding of the UvrA(2)B(2) complex to a putative damaged site, the DNA wraps around one UvrB monomer. DNA wrap is dependent on ATP binding by UvrB and probably causes local melting of the DNA helix, facilitating insertion of UvrB beta-hairpin between the DNA strands. Then UvrB probes one DNA strand for the presence of a lesion. If a lesion is found the UvrA subunits dissociate and the UvrB-DNA preincision complex is formed. This complex is subsequently bound by UvrC and the second UvrB is released. If no lesion is found, the DNA wraps around the other UvrB subunit that will check the other stand for damage. The sequence is that of UvrABC system protein B from Dechloromonas aromatica (strain RCB).